A 124-amino-acid polypeptide reads, in one-letter code: CD59 glycoprotein (124 aa).

A signal peptide spans 1-24 (MTSRGVHLLLRLLFLLAVFYSSDS). Positions 25 to 101 (SLMCYHCLLP…DLCNGPEDDG (77 aa)) constitute a UPAR/Ly6 domain. 5 disulfide bridges follow: cysteine 28/cysteine 51, cysteine 31/cysteine 38, cysteine 44/cysteine 64, cysteine 70/cysteine 88, and cysteine 89/cysteine 94. Asparagine 37 carries an N-linked (GlcNAc...) asparagine glycan. Glycine 101 is lipidated: GPI-anchor amidated glycine. A propeptide spans 102–124 (TALTGRTVLLVAPLLAAARNLCL) (removed in mature form).

Interacts with T-cell surface antigen CD2. In terms of processing, N- and O-glycosylated.

Its subcellular location is the cell membrane. It is found in the secreted. Potent inhibitor of the complement membrane attack complex (MAC) action, which protects self-cells from damage during complement activation. Acts by binding to the beta-haipins of C8 (C8A and C8B) components of the assembling MAC, forming an intermolecular beta-sheet that prevents incorporation of the multiple copies of C9 required for complete formation of the osmolytic pore. This is CD59 glycoprotein from Oryctolagus cuniculus (Rabbit).